Reading from the N-terminus, the 172-residue chain is Cytidylate kinase (172 aa).

8–16 lines the ATP pocket; that stretch reads GPPGSGKST.

This sequence belongs to the cytidylate kinase family. Type 2 subfamily.

It localises to the cytoplasm. The catalysed reaction is CMP + ATP = CDP + ADP. It catalyses the reaction dCMP + ATP = dCDP + ADP. The chain is Cytidylate kinase from Ignicoccus hospitalis (strain KIN4/I / DSM 18386 / JCM 14125).